We begin with the raw amino-acid sequence, 296 residues long: Origin of replication complex subunit 6 (296 aa).

The tract at residues 212–296 (PSKRKHDDDS…MALEVSSAAN (85 aa)) is disordered. The segment covering 220–236 (DSDSSGESSGDDQDELD) has biased composition (acidic residues). Residues 254–264 (WKSSVLSSNKQ) show a composition bias toward polar residues.

The protein belongs to the ORC6 family. Component of the origin recognition complex (ORC) composed of at least ORC1, ORC2, ORC3, ORC4, ORC5 and ORC6. ORC is regulated in a cell-cycle and development dependent manner. It is sequentially assembled at the exit from anaphase of mitosis and disassembled as cells enter S phase.

The protein localises to the nucleus. Its function is as follows. Component of the origin recognition complex (ORC) that binds origins of replication. DNA-binding is ATP-dependent. The specific DNA sequences that define origins of replication have not been identified yet. ORC is required to assemble the pre-replication complex necessary to initiate DNA replication. This chain is Origin of replication complex subunit 6, found in Oryza sativa subsp. indica (Rice).